Reading from the N-terminus, the 310-residue chain is Upstream stimulatory factor 1 (310 aa).

Residues 1-17 (MKGQQKTAETEEGTVQI) show a composition bias toward polar residues. 2 disordered regions span residues 1-26 (MKGQQKTAETEEGTVQIQEGAVATGE) and 171-209 (QGGSQRSIAPRTHPYSPKSEAPRTTRDEKRRAQHNEVER). Residues 190 to 209 (EAPRTTRDEKRRAQHNEVER) show a composition bias toward basic and acidic residues. The bHLH domain maps to 199 to 254 (KRRAQHNEVERRRRDKINNWIVQLSKIIPDCSMESTKSGQSKGGILSKACDYIQEL). Residues 271-292 (LQLDNDVLRQQVEDLKNKNLLL) form a leucine-zipper region. Lys-306 participates in a covalent cross-link: Glycyl lysine isopeptide (Lys-Gly) (interchain with G-Cter in SUMO2).

Efficient DNA binding requires dimerization with another bHLH protein. Binds DNA as a homodimer or a heterodimer (USF1/USF2).

It localises to the nucleus. In terms of biological role, transcription factor that binds to a symmetrical DNA sequence (E-boxes) (5'-CACGTG-3') that is found in a variety of viral and cellular promoters. The polypeptide is Upstream stimulatory factor 1 (USF1) (Bos taurus (Bovine)).